Consider the following 420-residue polypeptide: Cell division protein FtsA (420 aa).

Belongs to the FtsA/MreB family. In terms of assembly, self-interacts. Interacts with FtsZ.

It is found in the cell inner membrane. In terms of biological role, cell division protein that is involved in the assembly of the Z ring. May serve as a membrane anchor for the Z ring. This chain is Cell division protein FtsA, found in Escherichia coli O157:H7.